The sequence spans 131 residues: Probable ATP synthase subunit g 1, mitochondrial (131 aa).

The protein belongs to the ATPase g subunit family. Subunit of the F-type ATPase which has 2 components, CF(1) - the catalytic core - and CF(0) - the membrane proton channel.

The protein resides in the mitochondrion membrane. Its function is as follows. Mitochondrial membrane ATP synthase (F(1)F(0) ATP synthase or Complex V) produces ATP from ADP in the presence of a proton gradient across the membrane which is generated by electron transport complexes of the respiratory chain. F-type ATPases consist of two structural domains, F(1) - containing the extramembraneous catalytic core, and F(0) - containing the membrane proton channel, linked together by a central stalk and a peripheral stalk. During catalysis, ATP synthesis in the catalytic domain of F(1) is coupled via a rotary mechanism of the central stalk subunits to proton translocation. Part of the complex F(0) domain. Minor subunit located with subunit a in the membrane. This Caenorhabditis elegans protein is Probable ATP synthase subunit g 1, mitochondrial.